Here is a 218-residue protein sequence, read N- to C-terminus: Ribosomal RNA small subunit methyltransferase G (218 aa).

S-adenosyl-L-methionine contacts are provided by residues G82, L87, V133–E134, and R147.

The protein belongs to the methyltransferase superfamily. RNA methyltransferase RsmG family.

The protein resides in the cytoplasm. It catalyses the reaction guanosine(527) in 16S rRNA + S-adenosyl-L-methionine = N(7)-methylguanosine(527) in 16S rRNA + S-adenosyl-L-homocysteine. Specifically methylates the N7 position of guanine in position 527 of 16S rRNA. This is Ribosomal RNA small subunit methyltransferase G from Leptothrix cholodnii (strain ATCC 51168 / LMG 8142 / SP-6) (Leptothrix discophora (strain SP-6)).